A 200-amino-acid chain; its full sequence is Dephospho-CoA kinase (200 aa).

The region spanning 3 to 200 is the DPCK domain; sequence VIGLTGGIGS…KKYMTLAQGS (198 aa). 11–16 provides a ligand contact to ATP; sequence GSGKTS.

It belongs to the CoaE family.

The protein resides in the cytoplasm. The enzyme catalyses 3'-dephospho-CoA + ATP = ADP + CoA + H(+). It functions in the pathway cofactor biosynthesis; coenzyme A biosynthesis; CoA from (R)-pantothenate: step 5/5. In terms of biological role, catalyzes the phosphorylation of the 3'-hydroxyl group of dephosphocoenzyme A to form coenzyme A. The chain is Dephospho-CoA kinase from Nitrosospira multiformis (strain ATCC 25196 / NCIMB 11849 / C 71).